A 350-amino-acid polypeptide reads, in one-letter code: Tetraacyldisaccharide 4'-kinase (350 aa).

49–56 (TTGGTGKT) is an ATP binding site.

The protein belongs to the LpxK family.

It carries out the reaction a lipid A disaccharide + ATP = a lipid IVA + ADP + H(+). The protein operates within glycolipid biosynthesis; lipid IV(A) biosynthesis; lipid IV(A) from (3R)-3-hydroxytetradecanoyl-[acyl-carrier-protein] and UDP-N-acetyl-alpha-D-glucosamine: step 6/6. In terms of biological role, transfers the gamma-phosphate of ATP to the 4'-position of a tetraacyldisaccharide 1-phosphate intermediate (termed DS-1-P) to form tetraacyldisaccharide 1,4'-bis-phosphate (lipid IVA). This is Tetraacyldisaccharide 4'-kinase from Chlorobaculum tepidum (strain ATCC 49652 / DSM 12025 / NBRC 103806 / TLS) (Chlorobium tepidum).